Here is a 338-residue protein sequence, read N- to C-terminus: DNA-directed RNA polymerase subunit alpha (338 aa).

The tract at residues 1–234 is alpha N-terminal domain (alpha-NTD); it reads MIERNWNELI…DQLQIFITFE (234 aa). The interval 250-338 is alpha C-terminal domain (alpha-CTD); that stretch reads FNPALLKKVD…DLAKKFEDQI (89 aa).

The protein belongs to the RNA polymerase alpha chain family. As to quaternary structure, homodimer. The RNAP catalytic core consists of 2 alpha, 1 beta, 1 beta' and 1 omega subunit. When a sigma factor is associated with the core the holoenzyme is formed, which can initiate transcription.

It catalyses the reaction RNA(n) + a ribonucleoside 5'-triphosphate = RNA(n+1) + diphosphate. In terms of biological role, DNA-dependent RNA polymerase catalyzes the transcription of DNA into RNA using the four ribonucleoside triphosphates as substrates. This Caulobacter sp. (strain K31) protein is DNA-directed RNA polymerase subunit alpha.